The following is a 574-amino-acid chain: Septation ring formation regulator EzrA (574 aa).

Over 1-7 (MSIGLVI) the chain is Extracellular. The chain crosses the membrane as a helical span at residues 8–26 (LVAVVALLLVVGYGTAVLM). Coiled-coil stretches lie at residues 26 to 47 (MRKR…LYNL), 105 to 189 (KAKH…QFVT), 258 to 346 (ESRF…FLIS), 375 to 415 (SETK…IEKD), and 455 to 494 (STSN…LEEE). The Cytoplasmic portion of the chain corresponds to 27–574 (RKRNEALLQN…YEKTRENIRF (548 aa)).

It belongs to the EzrA family.

It is found in the cell membrane. Functionally, negative regulator of FtsZ ring formation; modulates the frequency and position of FtsZ ring formation. Inhibits FtsZ ring formation at polar sites. Interacts either with FtsZ or with one of its binding partners to promote depolymerization. This Streptococcus sanguinis (strain SK36) protein is Septation ring formation regulator EzrA.